Consider the following 320-residue polypeptide: Cytochrome c biogenesis protein CcsA (320 aa).

8 consecutive transmembrane segments (helical) span residues 13-33 (ISFS…FLLV), 46-66 (GMIV…IYSG), 73-93 (LYES…VSYL), 102-122 (LSAI…SGLL), 147-167 (MVLG…LLVI), 226-246 (IISL…VWAN), 259-274 (ETWA…IYFH), and 289-309 (VASM…LLGI).

It belongs to the CcmF/CycK/Ccl1/NrfE/CcsA family. May interact with Ccs1.

It localises to the plastid. Its subcellular location is the chloroplast thylakoid membrane. Its function is as follows. Required during biogenesis of c-type cytochromes (cytochrome c6 and cytochrome f) at the step of heme attachment. In Gossypium hirsutum (Upland cotton), this protein is Cytochrome c biogenesis protein CcsA.